Consider the following 309-residue polypeptide: uncharacterized protein (309 aa).

The protein belongs to the anthranilate phosphoribosyltransferase family.

This is an uncharacterized protein from Aquifex aeolicus (strain VF5).